The following is a 216-amino-acid chain: Pyridoxine/pyridoxamine 5'-phosphate oxidase (216 aa).

Substrate contacts are provided by residues 12–15 (RREY) and Lys70. FMN is bound by residues 65–70 (RLVLLK), 80–81 (YT), Arg86, Lys87, and Gln109. 3 residues coordinate substrate: Tyr127, Arg131, and Ser135. FMN contacts are provided by residues 144-145 (QS) and Trp189. 195–197 (RLH) contacts substrate. Residue Arg199 coordinates FMN.

The protein belongs to the pyridoxamine 5'-phosphate oxidase family. In terms of assembly, homodimer. The cofactor is FMN.

The enzyme catalyses pyridoxamine 5'-phosphate + O2 + H2O = pyridoxal 5'-phosphate + H2O2 + NH4(+). The catalysed reaction is pyridoxine 5'-phosphate + O2 = pyridoxal 5'-phosphate + H2O2. It functions in the pathway cofactor metabolism; pyridoxal 5'-phosphate salvage; pyridoxal 5'-phosphate from pyridoxamine 5'-phosphate: step 1/1. Its pathway is cofactor metabolism; pyridoxal 5'-phosphate salvage; pyridoxal 5'-phosphate from pyridoxine 5'-phosphate: step 1/1. In terms of biological role, catalyzes the oxidation of either pyridoxine 5'-phosphate (PNP) or pyridoxamine 5'-phosphate (PMP) into pyridoxal 5'-phosphate (PLP). In Baumannia cicadellinicola subsp. Homalodisca coagulata, this protein is Pyridoxine/pyridoxamine 5'-phosphate oxidase.